A 103-amino-acid chain; its full sequence is L-rhamnose-binding lectin ELEL-1 (103 aa).

In terms of domain architecture, SUEL-type lectin spans 13-102 (VCEGSSLTIS…KYLELSYDCS (90 aa)). 4 disulfide bridges follow: C14–C45, C23–C101, C56–C88, and C69–C75.

In terms of assembly, homodimer; disulfide-linked. Post-translationally, not glycosylated.

In terms of biological role, rhamnose-binding lectin. Also binds alpha-D-melibiose, alpha-D-lactose, beta-D-lactose, methyl-alpha-D-galactopyranoside, methyl-beta-D--galactopyranoside and D-galactose but not D-arabinose, L-fucose, D-glucose, D-mannose, D-maltose, D-sucrose, N-acetyl-D-galactosamine, N-acetyl-D-glucosamine, N-acetyl-D-mannosamine-D-xylose or by glycoproteins orosomucoid, thyroglobulin, ovomucoid and porcine stomach mucin. Shows cation-independent hemagglutinating activity against rabbit and human erythrocytes. Agglutinates cells of Gram-positive bacterial species S.aureus but not those of Gram-negative E.coli. This Echinometra lucunter (Rock-boring urchin) protein is L-rhamnose-binding lectin ELEL-1.